A 563-amino-acid chain; its full sequence is Probable trehalase (563 aa).

Substrate contacts are provided by residues R154, 161–162 (WD), N198, 207–209 (RSQ), 274–276 (RPE), and G307. Residues D309 and E517 each act as proton donor/acceptor in the active site. E532 serves as a coordination point for substrate.

This sequence belongs to the glycosyl hydrolase 37 family.

The catalysed reaction is alpha,alpha-trehalose + H2O = alpha-D-glucose + beta-D-glucose. In terms of biological role, involved in the regulation of trehalose content by hydrolyzing trehalose to glucose. The polypeptide is Probable trehalase (Oryza sativa subsp. japonica (Rice)).